The following is a 359-amino-acid chain: 4-hydroxy-3-methylbut-2-en-1-yl diphosphate synthase (flavodoxin) (359 aa).

[4Fe-4S] cluster is bound by residues C264, C267, C299, and E306.

It belongs to the IspG family. [4Fe-4S] cluster serves as cofactor.

It catalyses the reaction (2E)-4-hydroxy-3-methylbut-2-enyl diphosphate + oxidized [flavodoxin] + H2O + 2 H(+) = 2-C-methyl-D-erythritol 2,4-cyclic diphosphate + reduced [flavodoxin]. Its pathway is isoprenoid biosynthesis; isopentenyl diphosphate biosynthesis via DXP pathway; isopentenyl diphosphate from 1-deoxy-D-xylulose 5-phosphate: step 5/6. Functionally, converts 2C-methyl-D-erythritol 2,4-cyclodiphosphate (ME-2,4cPP) into 1-hydroxy-2-methyl-2-(E)-butenyl 4-diphosphate. The sequence is that of 4-hydroxy-3-methylbut-2-en-1-yl diphosphate synthase (flavodoxin) from Helicobacter pylori (strain Shi470).